Here is a 186-residue protein sequence, read N- to C-terminus: TATA-box-binding protein B (186 aa).

2 consecutive repeat copies span residues Ile-10 to Ile-86 and Val-101 to Leu-179.

This sequence belongs to the TBP family.

Functionally, general factor that plays a role in the activation of archaeal genes transcribed by RNA polymerase. Binds specifically to the TATA box promoter element which lies close to the position of transcription initiation. This is TATA-box-binding protein B (tbpB1) from Halobacterium salinarum (strain ATCC 700922 / JCM 11081 / NRC-1) (Halobacterium halobium).